The following is a 176-amino-acid chain: Ribosome maturation factor RimM (176 aa).

Positions 100–173 (PEEYYDYQLI…RLRIDPPPGL (74 aa)) constitute a PRC barrel domain.

This sequence belongs to the RimM family. As to quaternary structure, binds ribosomal protein uS19.

It localises to the cytoplasm. Functionally, an accessory protein needed during the final step in the assembly of 30S ribosomal subunit, possibly for assembly of the head region. Essential for efficient processing of 16S rRNA. May be needed both before and after RbfA during the maturation of 16S rRNA. It has affinity for free ribosomal 30S subunits but not for 70S ribosomes. The chain is Ribosome maturation factor RimM from Acidothermus cellulolyticus (strain ATCC 43068 / DSM 8971 / 11B).